The sequence spans 175 residues: Snake venom metalloproteinase BpMP-1 (175 aa).

The Peptidase M12B domain maps to 1–175; that stretch reads YIELAVVADH…KHNPQCILNK (175 aa). Ca(2+) is bound by residues Glu-3 and Asp-74. 3 cysteine pairs are disulfide-bonded: Cys-98/Cys-171, Cys-131/Cys-155, and Cys-133/Cys-138. A Zn(2+)-binding site is contributed by His-117. Glu-118 is an active-site residue. Zn(2+) is bound by residues His-121 and His-127. 2 residues coordinate Ca(2+): Cys-171 and Asn-174.

It belongs to the venom metalloproteinase (M12B) family. P-I subfamily. Monomer. Zn(2+) is required as a cofactor. Expressed by the venom gland.

Its subcellular location is the secreted. Inhibited by EDTA, 1,10-phenanthroline and beta-mercaptoethanol. Not inhibited by the serine protease inhibitors aprotinin and benzamidin. Functionally, non-hemorrhagic snake venom zinc metalloprotease that hydrolyzes the Aalpha-chain of fibrinogen, more slowly the Bbeta-chain and shows no effect on the gamma chain. Has no coagulant activity on bovine plasma and fibrinogen. The chain is Snake venom metalloproteinase BpMP-1 from Bothrops pauloensis (Neuwied's lancehead).